Reading from the N-terminus, the 631-residue chain is MSTTKLTRREQREHAQRFIDTLAGTAFPNSRRIYVHGSQADIRVPMREIELSPTLVGGDKDNPRYEANEPIPVYDTSGPYGDPDIGIDVRQGLAKLRQPWIDARNDCAPLSERSSAYTKARLADDGLDELRFSGLLTPKRAVAGKCVTQLHYARQGIVTPEMEFIAIRENMGRERIRSEVLRQQHAGEGFGARLPENITPEFVRDEVAAGRAIIPANINHPESEPMIIGRNFLVKVNANIGNSAVTSSIEEEVEKLVWSTRWGADTVMDLSTGRYIHETREWILRNSPVPIGTVPIYQALEKVNGIAENLTWEAFRDTLLEQAEQGVDYFTIHAGVLLRYVPMTAKRLTGIVSRGGSIMAKWCLSHHQENFLYQHFREICEICAAYDVSLSLGDGLRPGSIQDANDEAQFSELRTLGELTKIAWEYDVQVMIEGPGHVPMQMIRRNMTEELEHCHEAPFYTLGPLTTDIAPGYDHFTSGIGAAMIGWFGCAMLCYVTPKEHLGLPNKEDVKQGLITYKIAAHAADLAKGHPGAQIRDNAMSKARFEFRWEDQFNLALDPFTARAYHDETLPQESGKVAHFCSMCGPKFCSMKITQEVRDYAAKQNIEAGMADMSHHFRARGGEIYLKQEEA.

Substrate is bound by residues N239, M268, Y297, H333, 353–355 (SRG), 394–397 (DGLR), and E433. H437 provides a ligand contact to Zn(2+). Y460 is a binding site for substrate. H501 is a Zn(2+) binding site. Positions 581, 584, and 589 each coordinate [4Fe-4S] cluster.

Belongs to the ThiC family. In terms of assembly, homodimer. The cofactor is [4Fe-4S] cluster.

It catalyses the reaction 5-amino-1-(5-phospho-beta-D-ribosyl)imidazole + S-adenosyl-L-methionine = 4-amino-2-methyl-5-(phosphooxymethyl)pyrimidine + CO + 5'-deoxyadenosine + formate + L-methionine + 3 H(+). The protein operates within cofactor biosynthesis; thiamine diphosphate biosynthesis. In terms of biological role, catalyzes the synthesis of the hydroxymethylpyrimidine phosphate (HMP-P) moiety of thiamine from aminoimidazole ribotide (AIR) in a radical S-adenosyl-L-methionine (SAM)-dependent reaction. The protein is Phosphomethylpyrimidine synthase of Klebsiella pneumoniae (strain 342).